We begin with the raw amino-acid sequence, 141 residues long: Galactose-6-phosphate isomerase subunit LacA (141 aa).

Belongs to the LacAB/RpiB family. In terms of assembly, heteromultimeric protein consisting of LacA and LacB.

It carries out the reaction aldehydo-D-galactose 6-phosphate = keto-D-tagatose 6-phosphate. It participates in carbohydrate metabolism; D-galactose 6-phosphate degradation; D-tagatose 6-phosphate from D-galactose 6-phosphate: step 1/1. The sequence is that of Galactose-6-phosphate isomerase subunit LacA from Streptococcus pneumoniae serotype 2 (strain D39 / NCTC 7466).